The chain runs to 369 residues: MRERIATAKRVVVKIGSSSLTSDEGGHTVDPNRINTIVNALQARMEAGSDVIVVSSGSVAAGMAPLGLTTRPTDLSMKQAAAAVGQVHLMHQWGRSFARYGRPVGQVLLTAGDAGQRDRARNAQRTIDRLRMLGVIPIVNENDTVATTGVNFGDNDRLAAIVSHLVSADALVLLSDVDGLFDKNPADPTARFISEVRDGNDLKGVLAGDGGKVGTGGMASKVSAARLASRSGVPVLLTSAANIGPALEHAQVGTVFHPKENRLSAWKFWALYAADTAGKIRLDQGATEAVTSGGKSLLAVGITEVIGDFRAGEIVEILGPNGEIIGRGEVNYDSETLMPMLGMKTQELPDDMQRPVVHADYLSNYASRA.

K14 provides a ligand contact to ATP. Residues S56, D143, and N155 each coordinate substrate. Residues 175–176 and 215–221 each bind ATP; these read SD and TGGMASK. Residues 277-351 form the PUA domain; sequence AGKIRLDQGA…GMKTQELPDD (75 aa).

The protein belongs to the glutamate 5-kinase family.

It localises to the cytoplasm. It carries out the reaction L-glutamate + ATP = L-glutamyl 5-phosphate + ADP. It functions in the pathway amino-acid biosynthesis; L-proline biosynthesis; L-glutamate 5-semialdehyde from L-glutamate: step 1/2. Functionally, catalyzes the transfer of a phosphate group to glutamate to form L-glutamate 5-phosphate. The sequence is that of Glutamate 5-kinase from Corynebacterium efficiens (strain DSM 44549 / YS-314 / AJ 12310 / JCM 11189 / NBRC 100395).